The primary structure comprises 595 residues: Protein LUTEIN DEFICIENT 5, chloroplastic (595 aa).

The N-terminal 28 residues, M1 to V28, are a transit peptide targeting the chloroplast. C516 is a binding site for heme.

The protein belongs to the cytochrome P450 family. It depends on heme as a cofactor.

It is found in the plastid. The protein resides in the chloroplast. Heme-containing cytochrome P450 involved in the biosynthesis of xanthophylls. Specific for beta-ring hydroxylation of alpha- and beta-carotene. Also has a low activity toward the epsilon-rings of alpha-carotene. The beta-ring of alpha-carotene is the preferred substrate in planta. The sequence is that of Protein LUTEIN DEFICIENT 5, chloroplastic (CYP97A3) from Arabidopsis thaliana (Mouse-ear cress).